The following is a 441-amino-acid chain: MSGDARKTAEGLAYLSGFGNEHASEAVAGALPEGRNSPQRAPLGLYAEQLSGTAFTEPRAHNRRSWLYRIRPSAAHPAFTRSGNGTIRTAPFNQAVPDPNRLRWNPLPVPGPATDFVEGLWTLGGNGDATQRTGMAVHLYHATASMDRVFSDADGELLIVPERGGLLLRTEFGLLHAEPGHVALIPRGVRFRVQLLDEDARGYVCENYGAPFQLPDLGPIGANGLANARDFRAPVAAYEDDESTPGPVEVVNKFCGNLWTAEYDHSPLDVVAWHGNHVPYVYDLRRFNVIGSISYDHPDPSIFTVLTSPSDTPGLAGVDFVVFAPRWLVGEDTFRPPYFHRNVMSEYMGLIEGAYDAKAEGFVPGGGSLHNMMSAHGPDRETFDRASAAELKPQRIDDGLAFMFETRWPVTLTPQAARAEHLQPGYDDVWQGLERHFRPLH.

The active-site Proton acceptor is His297. The Fe cation site is built by His340 and Glu346. Positions 355 and 376 each coordinate homogentisate. His376 serves as a coordination point for Fe cation.

This sequence belongs to the homogentisate dioxygenase family. In terms of assembly, hexamer; dimer of trimers. Requires Fe cation as cofactor.

The catalysed reaction is homogentisate + O2 = 4-maleylacetoacetate + H(+). The protein operates within amino-acid degradation; L-phenylalanine degradation; acetoacetate and fumarate from L-phenylalanine: step 4/6. Functionally, involved in the catabolism of homogentisate (2,5-dihydroxyphenylacetate or 2,5-OH-PhAc), a central intermediate in the degradation of phenylalanine and tyrosine. Catalyzes the oxidative ring cleavage of the aromatic ring of homogentisate to yield maleylacetoacetate. The polypeptide is Homogentisate 1,2-dioxygenase (Streptomyces coelicolor (strain ATCC BAA-471 / A3(2) / M145)).